Here is a 166-residue protein sequence, read N- to C-terminus: Nucleotide-binding protein SUN_0226 (166 aa).

The protein belongs to the YajQ family.

In terms of biological role, nucleotide-binding protein. The sequence is that of Nucleotide-binding protein SUN_0226 from Sulfurovum sp. (strain NBC37-1).